Reading from the N-terminus, the 270-residue chain is Probable inner membrane protein BTH_II0599 (270 aa).

The next 6 helical transmembrane spans lie at 24–44 (RNPL…MLVS), 45–65 (LVPV…AVGF), 98–118 (LLTL…CSAL), 150–170 (ALIA…APVL), 198–218 (VYGL…AALM), and 226–246 (YALM…YCSF).

The protein localises to the cell inner membrane. (Microbial infection) Probably transports the toxic C-terminal region of CdiA-2 from B.pseudomallei strain 1026b across the inner membrane to the cytoplasm, where CdiA has a toxic effect. Expression in E.coli makes the bacteria sensitive to the tRNase domain of B.pseudomallei strain 1026b CdiA-2. The polypeptide is Probable inner membrane protein BTH_II0599 (Burkholderia thailandensis (strain ATCC 700388 / DSM 13276 / CCUG 48851 / CIP 106301 / E264)).